Here is a 301-residue protein sequence, read N- to C-terminus: Tyrosine recombinase XerC (301 aa).

Residues 2–84 (TNTQFYITNF…TLRSFFSYLY (83 aa)) enclose the Core-binding (CB) domain. Residues 105–291 (ALPKFLTVDD…DLKHLIEVYD (187 aa)) form the Tyr recombinase domain. Catalysis depends on residues arginine 145, lysine 169, histidine 243, arginine 246, and histidine 269. Tyrosine 278 acts as the O-(3'-phospho-DNA)-tyrosine intermediate in catalysis.

The protein belongs to the 'phage' integrase family. XerC subfamily. Forms a cyclic heterotetrameric complex composed of two molecules of XerC and two molecules of XerD.

The protein localises to the cytoplasm. Functionally, site-specific tyrosine recombinase, which acts by catalyzing the cutting and rejoining of the recombining DNA molecules. The XerC-XerD complex is essential to convert dimers of the bacterial chromosome into monomers to permit their segregation at cell division. It also contributes to the segregational stability of plasmids. In Thermodesulfovibrio yellowstonii (strain ATCC 51303 / DSM 11347 / YP87), this protein is Tyrosine recombinase XerC.